The chain runs to 193 residues: Cytidylate kinase (193 aa).

Position 12–20 (12–20 (GLAGSGTTT)) interacts with ATP.

The protein belongs to the cytidylate kinase family. Type 2 subfamily.

Its subcellular location is the cytoplasm. It catalyses the reaction CMP + ATP = CDP + ADP. It carries out the reaction dCMP + ATP = dCDP + ADP. The chain is Cytidylate kinase from Thermococcus sibiricus (strain DSM 12597 / MM 739).